Reading from the N-terminus, the 116-residue chain is uncharacterized protein (116 aa).

The protein belongs to the BolA/IbaG family.

The protein resides in the mitochondrion. This is an uncharacterized protein from Schizosaccharomyces pombe (strain 972 / ATCC 24843) (Fission yeast).